Reading from the N-terminus, the 695-residue chain is Putative pentatricopeptide repeat-containing protein At1g77010, mitochondrial (695 aa).

The transit peptide at 1 to 64 (MILKYNSSYR…KGFLSSIVIV (64 aa)) directs the protein to the mitochondrion. PPR repeat units follow at residues 61–91 (IVIV…MPDR), 92–122 (NYFS…MPER), 123–157 (DGYS…DVVT), 159–184 (NSLL…LNFS), 186–220 (DAIT…GVEC), 221–251 (DSKM…IREP), 252–282 (DDHS…KSNR), 283–313 (CVIL…MRNE), 317–351 (DSRT…GLID), 352–382 (DIVV…VESY), 383–417 (DTIL…SLIS), 418–448 (WNSM…DLPT), 449–483 (DEVS…GLDS), 484–514 (DQVV…MVKS), 515–549 (DEVP…GIRP), 550–585 (TQIT…GFVP), and 586–616 (DKEH…MPFD). A type E motif; degenerate region spans residues 621 to 695 (MWSSILRGCV…KNPGSSWTDC (75 aa)).

It belongs to the PPR family. PCMP-E subfamily.

The protein resides in the mitochondrion. This chain is Putative pentatricopeptide repeat-containing protein At1g77010, mitochondrial (PCMP-E5), found in Arabidopsis thaliana (Mouse-ear cress).